The primary structure comprises 204 residues: Prephenate decarboxylase (204 aa).

Belongs to the prephenate decarboxylase family.

The protein resides in the cytoplasm. The catalysed reaction is prephenate + H(+) = 3-[(4R)-4-hydroxycyclohexa-1,5-dien-1-yl]-2-oxopropanoate + CO2. It functions in the pathway antibiotic biosynthesis; bacilysin biosynthesis. Functionally, part of the bacABCDEF operon responsible for the biosynthesis of the nonribosomally synthesized dipeptide antibiotic bacilysin, composed of L-alanine and L-anticapsin. Bacilysin is an irreversible inactivator of the glutaminase domain of glucosamine synthetase. BacA is an unusual prephenate decarboxylase that avoids the typical aromatization of the cyclohexadienol ring of prephenate. BacA catalyzes the protonation of prephenate (1-carboxy-4-hydroxy-alpha-oxo-2,5-cyclohexadiene-1-propanoic acid) at C6 position, followed by a decarboxylation to produce the endocyclic-delta(4),delta(8)-7R-dihydro-hydroxyphenylpyruvate (en-H2HPP). En-H2HPP is able to undergo a slow nonenzymatic isomerization to produce the exocyclic-delta(3),delta(5)-dihydro-hydroxyphenylpyruvate (ex-H2HPP). BacA isomerizes only the pro-R double bond in prephenate. This Bacillus amyloliquefaciens (Bacillus velezensis) protein is Prephenate decarboxylase.